Reading from the N-terminus, the 131-residue chain is Large ribosomal subunit protein bL12 (131 aa).

This sequence belongs to the bacterial ribosomal protein bL12 family. In terms of assembly, homodimer. Part of the ribosomal stalk of the 50S ribosomal subunit. Forms a multimeric L10(L12)X complex, where L10 forms an elongated spine to which 2 to 4 L12 dimers bind in a sequential fashion. Binds GTP-bound translation factors.

Its function is as follows. Forms part of the ribosomal stalk which helps the ribosome interact with GTP-bound translation factors. Is thus essential for accurate translation. The protein is Large ribosomal subunit protein bL12 of Prochlorococcus marinus (strain NATL2A).